A 146-amino-acid chain; its full sequence is MKLLIDADACPREVLRTSLELGRRFQVPVWTVASFNHVIASDRHVVVGGAAQETDIKVMNLAEPGDVAVTQDFGLAAMLIGKGVRCLGPSGRLYDAERIDLLLEERELKARFRRGGGRTKGPKKRTAEEDRRFAGALETLLREWNG.

Belongs to the UPF0178 family.

In Heliobacterium modesticaldum (strain ATCC 51547 / Ice1), this protein is UPF0178 protein Helmi_09130.